A 257-amino-acid polypeptide reads, in one-letter code: Acetylglutamate kinase (257 aa).

Substrate is bound by residues G41–G42, R63, and N156.

It belongs to the acetylglutamate kinase family. ArgB subfamily.

Its subcellular location is the cytoplasm. The enzyme catalyses N-acetyl-L-glutamate + ATP = N-acetyl-L-glutamyl 5-phosphate + ADP. The protein operates within amino-acid biosynthesis; L-arginine biosynthesis; N(2)-acetyl-L-ornithine from L-glutamate: step 2/4. Its function is as follows. Catalyzes the ATP-dependent phosphorylation of N-acetyl-L-glutamate. The protein is Acetylglutamate kinase of Geobacillus sp. (strain WCH70).